A 411-amino-acid polypeptide reads, in one-letter code: Pyruvate dehydrogenase E1 component subunit alpha, mitochondrial (411 aa).

Residues 1 to 29 constitute a mitochondrion transit peptide; the sequence is MFSRAVRLSRAALPIRVASQRVPIAARRS. 10 residues coordinate pyruvate: H111, Y137, R138, G184, V186, D215, G216, A217, N244, and Y246. Thiamine diphosphate-binding residues include Y137, R138, G184, V186, D215, G216, A217, and N244. D215 contacts Mg(2+). Mg(2+)-binding residues include N244 and Y246. H311 contacts thiamine diphosphate.

As to quaternary structure, eukaryotic pyruvate dehydrogenase (PDH) complexes are organized as a core consisting of the oligomeric dihydrolipoamide acetyl-transferase (E2), around which are arranged multiple copies of pyruvate dehydrogenase (E1), dihydrolipoamide dehydrogenase (E3) and protein X (E3BP) bound by non-covalent bonds. The Chaetomium thermophilum PDH complex contains 60 E2 units, 12 E3BP units, about 20 E1 units, and 12 or more E3 units. The units are organized in 1 E2 60-mer, 4 E3BP trimers, about 20 E1 tetramers, and a maximum of 12 E3 dimers. Pyruvate dehydrogenase (E1) is active as a tetramer of 2 alpha and 2 beta subunits. The E3BP trimers are bound inside the icosahedral core with tetrahedral symmetry. It depends on thiamine diphosphate as a cofactor. Requires Mg(2+) as cofactor.

It localises to the mitochondrion. The catalysed reaction is N(6)-[(R)-lipoyl]-L-lysyl-[protein] + pyruvate + H(+) = N(6)-[(R)-S(8)-acetyldihydrolipoyl]-L-lysyl-[protein] + CO2. The 10-megadalton pyruvate dehydrogenase complex contains multiple copies of three enzymatic components: pyruvate dehydrogenase (E1), dihydrolipoamide acetyltransferase (E2) and lipoamide dehydrogenase (E3) and catalyzes the overall oxidative decarboxylation of pyruvate to form acetyl-CoA and CO(2). Within the complex, pyruvate and thiamine pyrophosphate (TPP or vitamin B1) are bound by pyruvate dehydrogenase E1 subunits alpha and beta and pyruvate is decarboxylated leading to the 2-carbon hydrohyethyl bound to TPP. The E2 component contains covalently-bound lipoyl cofactors and transfers the hydroxyethyl group from TPP to an oxidized form of covalently bound lipoamide, and the resulting acetyl group is then transferred to free coenzyme A to form acetyl-CoA and reduced dihydrolipoamide-E2. Finally, the flavoprotein dihydrolipoamide dehydrogenase (E3) re-oxidizes the lipoyl group of dihydrolipoamide-E2 to form lipoamide-E2 and NADH. A fourth subunit, E3BP, is responsible for tethering E3 in proximity to the core, forming the entire metabolon. This is Pyruvate dehydrogenase E1 component subunit alpha, mitochondrial from Chaetomium thermophilum (strain DSM 1495 / CBS 144.50 / IMI 039719) (Thermochaetoides thermophila).